Reading from the N-terminus, the 286-residue chain is Pyridoxal kinase PdxY (286 aa).

Substrate-binding positions include Ser9 and Thr44 to Gln45. Residues Asp111, Glu148, and Lys181 each contribute to the ATP site. Asp222 provides a ligand contact to substrate.

This sequence belongs to the pyridoxine kinase family. PdxY subfamily. As to quaternary structure, homodimer. The cofactor is Mg(2+).

The enzyme catalyses pyridoxal + ATP = pyridoxal 5'-phosphate + ADP + H(+). The protein operates within cofactor metabolism; pyridoxal 5'-phosphate salvage; pyridoxal 5'-phosphate from pyridoxal: step 1/1. Its function is as follows. Pyridoxal kinase involved in the salvage pathway of pyridoxal 5'-phosphate (PLP). Catalyzes the phosphorylation of pyridoxal to PLP. The sequence is that of Pyridoxal kinase PdxY from Pasteurella multocida (strain Pm70).